A 95-amino-acid chain; its full sequence is FXYD domain-containing ion transport regulator 6 (95 aa).

The signal sequence occupies residues 1-18; it reads MELVLVFLCSLLAPMVLA. Residues 19–35 lie on the Extracellular side of the membrane; the sequence is SAAEKEKEMDPFHYDYQ. A helical transmembrane segment spans residues 36–57; sequence TLRIGGLVFAVVLFSVGILLIL. Residues 58–95 lie on the Cytoplasmic side of the membrane; it reads SRRCKCSFNQKPRAPGDEEAQVENLITANATEPQKAEN. The interval 69 to 95 is disordered; that stretch reads PRAPGDEEAQVENLITANATEPQKAEN.

It belongs to the FXYD family. As to quaternary structure, regulatory subunit of the sodium/potassium-transporting ATPase which is composed of a catalytic alpha subunit, a non-catalytic beta subunit and an additional regulatory subunit. The regulatory subunit, a member of the FXYD protein family, modulates the enzymatic activity in a tissue- and isoform-specific way by changing affinities of the Na+/K+-ATPase toward Na(+), K(+) or ATP.

It localises to the cell membrane. Its function is as follows. Associates with and regulates the activity of the sodium/potassium-transporting ATPase (NKA) which catalyzes the hydrolysis of ATP coupled with the exchange of Na(+) and K(+) ions across the plasma membrane. Reduces the apparent affinity for intracellular Na(+) with no change in the apparent affinity for extracellular K(+). In addition to modulating NKA kinetics, may also function as a regulator of NKA localization to the plasma membrane. In Homo sapiens (Human), this protein is FXYD domain-containing ion transport regulator 6.